A 236-amino-acid polypeptide reads, in one-letter code: 2-C-methyl-D-erythritol 4-phosphate cytidylyltransferase (236 aa).

It belongs to the IspD/TarI cytidylyltransferase family. IspD subfamily. Homodimer.

The enzyme catalyses 2-C-methyl-D-erythritol 4-phosphate + CTP + H(+) = 4-CDP-2-C-methyl-D-erythritol + diphosphate. It participates in isoprenoid biosynthesis; isopentenyl diphosphate biosynthesis via DXP pathway; isopentenyl diphosphate from 1-deoxy-D-xylulose 5-phosphate: step 2/6. Catalyzes the formation of 4-diphosphocytidyl-2-C-methyl-D-erythritol from CTP and 2-C-methyl-D-erythritol 4-phosphate (MEP). This chain is 2-C-methyl-D-erythritol 4-phosphate cytidylyltransferase, found in Escherichia coli O127:H6 (strain E2348/69 / EPEC).